A 405-amino-acid polypeptide reads, in one-letter code: Neisseria adhesin A (405 aa).

Positions 1 to 23 (MKHFPSKVLTTAILATFCSGALA) are cleaved as a signal peptide. Positions 24-87 (ATNDDDVKKA…ADDFKGLGLK (64 aa)) are head domain. 2 coiled-coil regions span residues 87–170 (KKVV…KLEA) and 181–329 (AFND…LRKE). Residues 88-350 (KVVTNLTKTV…SGLFQPYNVG (263 aa)) form a coiled stalk domain region. The outer membrane translocation of the passenger domain stretch occupies residues 312–350 (HDTRLNGLDKTVSDLRKETRQGLAEQAALSGLFQPYNVG). Beta stranded transmembrane passes span 350–360 (GRFNVTAAVGG), 364–375 (ESAVAIGTGFRF), 382–388 (KAGVAVG), and 394–405 (SAAYHVGVNYEW). Residues 351–405 (RFNVTAAVGGYKSESAVAIGTGFRFTENFAAKAGVAVGTSSGSSAAYHVGVNYEW) are translocator domain.

The protein belongs to the autotransporter-2 (AT-2) (TC 1.B.40) family. In terms of assembly, the non-membrane anchored protein (residues 24-350) probably forms a homotrimer; it is assumed the mature protein forms trimers in situ. The mature protein without the membrane-targeting segment (residues 24-350) binds to human heat shock 90 beta protein (HSP90AB1) both in vitro and when incubated with human monocytes. A subsequent paper showed binding of the same fragment in epithelial cells to both HSP90AA1 and HSP90AB1; in vitro the interaction is stabilized by ADP and the Hsp90 inhibitor 17-AAG (17-N-allylamino-17-demethoxygeldanamycin), in vitro and in vivo both interactions are inhibited by ATP. Binds human oxidized low-density lipoprotein receptor 1 (LOX-1, OLR1) in protein microarrays, in solution and when LOX-1 is expressed on the cell surface. Binds via the head and the beginning of the coiled stalk (residues 24-170); binding can be abrogated by monoclonal antibodies against those specific regions of NadA. Other potential binding partners were identified but not characterized in the same study. Forms high molecular weight oligomers in whole cell extracts that are not disrupted by boiling in SDS buffer.

It localises to the cell outer membrane. The protein localises to the cell surface. Adheres to and induces bacterial uptake by human epithelial cells in a microfilament-dependent process. Binding is reduced by pronase treatment, suggesting there is a protein receptor on the human cells. Possible human protein receptors include integrin beta-1 (ITGB1) and oxidized low-density lipoprotein receptor 1 (OLR1). Binds to extracellular human Hsp90 (preferentially the beta isoform, HSP90AB1) on monocytes, binding stimulates monocytes in a TLR4-dependent fashion, polymixin B, which binds NadA, blocks the activation. Hsp90 is probably not the first receptor on human monocytes. Non-membrane anchored protein (residues 24-350) is internalized into human epithelial cells by hijacking the endosome recycling pathway and may be recycled back to the cell surface, which might aid transcellular trafficking of the bacteria. A bacterial cell surface protein; antisera against this protein induce complement-mediated killing of this and other strains. This Neisseria meningitidis serogroup B protein is Neisseria adhesin A.